The chain runs to 829 residues: Probable beta-glucosidase H (829 aa).

Asparagine 13 is a glycosylation site (N-linked (GlcNAc...) asparagine). Aspartate 225 is an active-site residue. Residues asparagine 304, asparagine 473, asparagine 602, asparagine 627, and asparagine 664 are each glycosylated (N-linked (GlcNAc...) asparagine). The PA14 domain maps to 389-548; that stretch reads RMLSNAVIHF…DPEQMVANAV (160 aa).

This sequence belongs to the glycosyl hydrolase 3 family.

The protein resides in the secreted. The enzyme catalyses Hydrolysis of terminal, non-reducing beta-D-glucosyl residues with release of beta-D-glucose.. Its pathway is glycan metabolism; cellulose degradation. Its function is as follows. Beta-glucosidases are one of a number of cellulolytic enzymes involved in the degradation of cellulosic biomass. Catalyzes the last step releasing glucose from the inhibitory cellobiose. The chain is Probable beta-glucosidase H (bglH) from Aspergillus fumigatus (strain ATCC MYA-4609 / CBS 101355 / FGSC A1100 / Af293) (Neosartorya fumigata).